The chain runs to 552 residues: Chaperonin GroEL (552 aa).

ATP is bound by residues 30 to 33, K51, 87 to 91, G415, and D496; these read TLGP and DGTTT.

Belongs to the chaperonin (HSP60) family. Forms a cylinder of 14 subunits composed of two heptameric rings stacked back-to-back. Interacts with the co-chaperonin GroES.

The protein localises to the cytoplasm. The catalysed reaction is ATP + H2O + a folded polypeptide = ADP + phosphate + an unfolded polypeptide.. In terms of biological role, together with its co-chaperonin GroES, plays an essential role in assisting protein folding. The GroEL-GroES system forms a nano-cage that allows encapsulation of the non-native substrate proteins and provides a physical environment optimized to promote and accelerate protein folding. The chain is Chaperonin GroEL from Paramagnetospirillum magneticum (strain ATCC 700264 / AMB-1) (Magnetospirillum magneticum).